The primary structure comprises 763 residues: MKREHMDHDTEDVGQAAQRADPPSGTTEGRLQSTQAIFRPNFDDDDDLLHISVPSVDTEPQDRITPATRVLPPIRQLGGGLVEIRRVRDIDPLEALMTNPVVPESKRFCWNCGRPVGRSELEGQEADGAQGAKEGWCPYCGSPYSFLPQLSPGDIVAGQYEVKGCIAHGGLGWVYLAFDHNVNDRPVVLKGLVHSGDAEAQASAVAERQFLAEVVHPQIVQIFNFVEHKDTSGDPVGYIVMEYIGGRSLKRGSKKGNVEKLPVAEAIAYLLEILPALSYLHSIGLVYNDLKPENIMLTEEQLKLIDLGAVSRINSFGCIYGTPGYQAPEIVRTGPTVATDIYTVGRTLAALTLNLRTRNGRYMDGLPEDDPVLTTYDSFARLLHRAINPDPRRRFSSAEEMSAQLMGVLREVVAQDTGVPRAGLSTIFSPSRSTFGVDLLVAHTDVYLDGRLHSEKLTAKDIVTALQVPLVDPTDVAAPVLQATVLSQPVQTLDSLRAARHGMLDAQGIDLAESVELPLMEVRALLDLGDVVKANRKLDDLADRVSCQWRLVWYRAVADLLTGDYASATKHFTEVLNTFPGELAPKLALAATAELAGESDEHKFYRTVWHTNDGVVSAAFGLARFQSAEGDRTGAVCTLDEVPPTSRHFTTARLTSAVTLLSGRSTNEITEQQIRDAARRVETLPPTEPRVLQIRALVLGCAMDWLADNQASANHILGFPFTKHGLRLGVEASLRSLARVAPTQRHRYTLVDMANKVRPTSTL.

The interval 1–32 (MKREHMDHDTEDVGQAAQRADPPSGTTEGRLQ) is disordered. The Protein kinase domain maps to 160 to 406 (YEVKGCIAHG…SAEEMSAQLM (247 aa)). ATP is bound by residues 166–174 (IAHGGLGWV) and Lys190. Asp289 functions as the Proton acceptor in the catalytic mechanism.

The protein belongs to the protein kinase superfamily. Ser/Thr protein kinase family. Post-translationally, autophosphorylated.

It catalyses the reaction L-seryl-[protein] + ATP = O-phospho-L-seryl-[protein] + ADP + H(+). It carries out the reaction L-threonyl-[protein] + ATP = O-phospho-L-threonyl-[protein] + ADP + H(+). This Mycobacterium leprae (strain TN) protein is Serine/threonine-protein kinase PknG (pknG).